Reading from the N-terminus, the 189-residue chain is Putative nucleotidase BC_3386 (189 aa).

The protein belongs to the 5'(3')-deoxyribonucleotidase family.

The polypeptide is Putative nucleotidase BC_3386 (Bacillus cereus (strain ATCC 14579 / DSM 31 / CCUG 7414 / JCM 2152 / NBRC 15305 / NCIMB 9373 / NCTC 2599 / NRRL B-3711)).